A 124-amino-acid polypeptide reads, in one-letter code: Large ribosomal subunit protein bL12 (124 aa).

This sequence belongs to the bacterial ribosomal protein bL12 family. As to quaternary structure, homodimer. Part of the ribosomal stalk of the 50S ribosomal subunit. Forms a multimeric L10(L12)X complex, where L10 forms an elongated spine to which 2 to 4 L12 dimers bind in a sequential fashion. Binds GTP-bound translation factors.

In terms of biological role, forms part of the ribosomal stalk which helps the ribosome interact with GTP-bound translation factors. Is thus essential for accurate translation. This is Large ribosomal subunit protein bL12 from Azobacteroides pseudotrichonymphae genomovar. CFP2.